Reading from the N-terminus, the 507-residue chain is Cytochrome P450 71D2 (507 aa).

The next 2 membrane-spanning stretches (helical) occupy residues 6–26 and 447–467; these read LPFN…LIYG and ICPG…LLLY. C448 lines the heme pocket.

This sequence belongs to the cytochrome P450 family.

Its subcellular location is the membrane. This is Cytochrome P450 71D2 from Catharanthus roseus (Madagascar periwinkle).